A 629-amino-acid chain; its full sequence is tRNA uridine 5-carboxymethylaminomethyl modification enzyme MnmG (629 aa).

13–18 (GGGHAG) is an FAD binding site. 273 to 287 (GPRYCPSIEDKITRF) lines the NAD(+) pocket.

This sequence belongs to the MnmG family. As to quaternary structure, homodimer. Heterotetramer of two MnmE and two MnmG subunits. FAD is required as a cofactor.

It is found in the cytoplasm. In terms of biological role, NAD-binding protein involved in the addition of a carboxymethylaminomethyl (cmnm) group at the wobble position (U34) of certain tRNAs, forming tRNA-cmnm(5)s(2)U34. This is tRNA uridine 5-carboxymethylaminomethyl modification enzyme MnmG from Aeromonas hydrophila subsp. hydrophila (strain ATCC 7966 / DSM 30187 / BCRC 13018 / CCUG 14551 / JCM 1027 / KCTC 2358 / NCIMB 9240 / NCTC 8049).